A 515-amino-acid polypeptide reads, in one-letter code: ATP synthase subunit alpha (515 aa).

171 to 178 (GDRQTGKT) lines the ATP pocket.

This sequence belongs to the ATPase alpha/beta chains family. As to quaternary structure, F-type ATPases have 2 components, CF(1) - the catalytic core - and CF(0) - the membrane proton channel. CF(1) has five subunits: alpha(3), beta(3), gamma(1), delta(1), epsilon(1). CF(0) has three main subunits: a(1), b(2) and c(9-12). The alpha and beta chains form an alternating ring which encloses part of the gamma chain. CF(1) is attached to CF(0) by a central stalk formed by the gamma and epsilon chains, while a peripheral stalk is formed by the delta and b chains.

The protein resides in the cell inner membrane. It carries out the reaction ATP + H2O + 4 H(+)(in) = ADP + phosphate + 5 H(+)(out). Functionally, produces ATP from ADP in the presence of a proton gradient across the membrane. The alpha chain is a regulatory subunit. In Xanthomonas axonopodis pv. citri (strain 306), this protein is ATP synthase subunit alpha.